Consider the following 277-residue polypeptide: Myelin proteolipid protein (277 aa).

Residues 1–10 (MGLLECCARC) are Cytoplasmic-facing. 3 S-palmitoyl cysteine lipidation sites follow: Cys-6, Cys-7, and Cys-10. The chain crosses the membrane as a helical span at residues 11–36 (LVGAPFASLVATGLCFFGVALFCGCG). Topologically, residues 37-59 (HEALTGTEKLIETYFSKNYQDYE) are extracellular. The chain crosses the membrane as a helical span at residues 60-88 (YLINVIHAFQYVIYGTASFFFLYGALLLA). The Cytoplasmic portion of the chain corresponds to 89–151 (EGFYTTGAVR…LGKWLGHPDK (63 aa)). Residue Cys-109 is the site of S-palmitoyl cysteine attachment. The residue at position 114 (Ser-114) is a Phosphoserine. Residues Thr-116 and Thr-118 each carry the phosphothreonine modification. Residues Cys-139 and Cys-141 are each lipidated (S-palmitoyl cysteine). The chain crosses the membrane as a helical span at residues 152 to 178 (FVGITYALTIVWLLVFACSAVPVYIYF). The Extracellular segment spans residues 179-238 (NTWTTCQSIAFPSKTSASIGSLCADARMYGVLPWNAFPGKVCGSNLLSICKTAEFQMTFH). 2 disulfide bridges follow: Cys-184/Cys-228 and Cys-201/Cys-220. The O-palmitoyl serine moiety is linked to residue Ser-199. A helical membrane pass occupies residues 239-268 (LFIAAFVGAAATLVSLLTFMIAATYNFAVL). Over 269-277 (KLMGRGTKF) the chain is Cytoplasmic.

This sequence belongs to the myelin proteolipid protein family.

Its subcellular location is the cell membrane. The protein localises to the myelin membrane. Functionally, this is the major myelin protein from the central nervous system. It plays an important role in the formation or maintenance of the multilamellar structure of myelin. The protein is Myelin proteolipid protein (PLP1) of Canis lupus familiaris (Dog).